Consider the following 278-residue polypeptide: D-aminoacyl-tRNA deacylase (278 aa).

The protein belongs to the DtdA deacylase family. Monomer. The cofactor is Zn(2+).

It carries out the reaction a D-aminoacyl-tRNA + H2O = a tRNA + a D-alpha-amino acid + H(+). The enzyme catalyses glycyl-tRNA(Ala) + H2O = tRNA(Ala) + glycine + H(+). D-aminoacyl-tRNA deacylase with broad substrate specificity. By recycling D-aminoacyl-tRNA to D-amino acids and free tRNA molecules, this enzyme counteracts the toxicity associated with the formation of D-aminoacyl-tRNA entities in vivo. This chain is D-aminoacyl-tRNA deacylase, found in Archaeoglobus fulgidus (strain ATCC 49558 / DSM 4304 / JCM 9628 / NBRC 100126 / VC-16).